The following is a 312-amino-acid chain: Putative pyridoxal kinase BUD16 (312 aa).

Ser-9, Thr-44, and Tyr-122 together coordinate substrate. ATP-binding positions include 183-184 (TS) and 211-223 (RVPF…TGVG). Residue Asp-224 coordinates substrate.

It belongs to the pyridoxine kinase family. The cofactor is a divalent metal cation.

The protein resides in the cytoplasm. The protein localises to the nucleus. The catalysed reaction is pyridoxal + ATP = pyridoxal 5'-phosphate + ADP + H(+). Its function is as follows. Required for synthesis of pyridoxal-5-phosphate from vitamin B6. Important for bud site selection. In Saccharomyces cerevisiae (strain ATCC 204508 / S288c) (Baker's yeast), this protein is Putative pyridoxal kinase BUD16 (BUD16).